Consider the following 827-residue polypeptide: Probable beta-glucosidase H (827 aa).

The active site involves Asp223. Residues 387–546 (RLLTNAVMHF…DSAEMVRSAV (160 aa)) form the PA14 domain. N-linked (GlcNAc...) asparagine glycans are attached at residues Asn471, Asn594, Asn600, and Asn625.

It belongs to the glycosyl hydrolase 3 family.

The protein resides in the secreted. The enzyme catalyses Hydrolysis of terminal, non-reducing beta-D-glucosyl residues with release of beta-D-glucose.. Its pathway is glycan metabolism; cellulose degradation. Beta-glucosidases are one of a number of cellulolytic enzymes involved in the degradation of cellulosic biomass. Catalyzes the last step releasing glucose from the inhibitory cellobiose. This is Probable beta-glucosidase H (bglH) from Aspergillus flavus (strain ATCC 200026 / FGSC A1120 / IAM 13836 / NRRL 3357 / JCM 12722 / SRRC 167).